The chain runs to 237 residues: uncharacterized protein (237 aa).

Positions 13–218 (VVGLSGGVAT…KSWKPYIFRV (206 aa)) constitute a DPCK domain. 18–25 (GGVATGKS) contributes to the ATP binding site.

It belongs to the CoaE family.

This is an uncharacterized protein from Caenorhabditis elegans.